Reading from the N-terminus, the 176-residue chain is Inner membrane-spanning protein YciB (176 aa).

The next 6 helical transmembrane spans lie at 3–23 (FLFDLFPIILFFVAFKVWGIF), 24–44 (TATAVAIVATLAQVAWVAFRH), 49–69 (TMLWVSLGVIVVFGGATLVLH), 72–92 (KFIQWKPTVLYWLFAIGLLAA), 121–141 (LAWALFFAVLGVANLYVVHNF), and 149–169 (FKLFGTTGAMVVFIILQSLWL).

Belongs to the YciB family.

Its subcellular location is the cell inner membrane. Plays a role in cell envelope biogenesis, maintenance of cell envelope integrity and membrane homeostasis. The polypeptide is Inner membrane-spanning protein YciB (Burkholderia cenocepacia (strain ATCC BAA-245 / DSM 16553 / LMG 16656 / NCTC 13227 / J2315 / CF5610) (Burkholderia cepacia (strain J2315))).